Reading from the N-terminus, the 646-residue chain is Lipoteichoic acid synthase (646 aa).

Topologically, residues Met1–Lys7 are cytoplasmic. A helical transmembrane segment spans residues Ile8–Ser28. Topologically, residues Tyr29–Asn43 are extracellular. Residues Leu44–Phe64 traverse the membrane as a helical segment. Residues Lys65 to Lys68 lie on the Cytoplasmic side of the membrane. A helical transmembrane segment spans residues Ala69–Val89. Over Tyr90–Ser119 the chain is Extracellular. Residues Phe120–Phe140 traverse the membrane as a helical segment. At Lys141 to Lys153 the chain is on the cytoplasmic side. A helical membrane pass occupies residues Phe154 to Glu174. Topologically, residues Thr175–Lys646 are extracellular. Glu255 and Thr300 together coordinate Mn(2+). The active site involves Thr300. His416 provides a ligand contact to substrate. 2 residues coordinate Mn(2+): Asp475 and His476.

Belongs to the LTA synthase family. Post-translationally, proteolytically cleaved.

It is found in the cell membrane. It localises to the secreted. It functions in the pathway cell wall biogenesis; lipoteichoic acid biosynthesis. Functionally, catalyzes the polymerization of lipoteichoic acid (LTA) polyglycerol phosphate, a reaction that presumably uses phosphatidylglycerol (PG) as substrate. Is required for staphylococcal growth and cell division process. In Staphylococcus epidermidis (strain ATCC 12228 / FDA PCI 1200), this protein is Lipoteichoic acid synthase (ltaS).